The chain runs to 102 residues: Large ribosomal subunit protein uL24 (102 aa).

Belongs to the universal ribosomal protein uL24 family. Part of the 50S ribosomal subunit.

In terms of biological role, one of two assembly initiator proteins, it binds directly to the 5'-end of the 23S rRNA, where it nucleates assembly of the 50S subunit. One of the proteins that surrounds the polypeptide exit tunnel on the outside of the subunit. The chain is Large ribosomal subunit protein uL24 from Rhizobium rhizogenes (strain K84 / ATCC BAA-868) (Agrobacterium radiobacter).